We begin with the raw amino-acid sequence, 508 residues long: Strychnine-11-hydroxylase (508 aa).

Residues 5-25 form a helical membrane-spanning segment; it reads MSFLLLFSLCFLIHCFVFLLI. Cys445 contacts heme.

It belongs to the cytochrome P450 family. It depends on heme as a cofactor.

It localises to the membrane. The enzyme catalyses beta-colubrine + reduced [NADPH--hemoprotein reductase] + O2 = 11-demethylbrucine + oxidized [NADPH--hemoprotein reductase] + H2O + H(+). It functions in the pathway alkaloid biosynthesis. Functionally, monooxygenase involved in the biosynthesis of curare monoterpene indole alkaloids (MIAs), natural products such as strychnine, a neurotoxic compound used as a pesticide to control rodents, and its pharmacologically active derivatives, including brucine, used to regulate blood pressure. Curare alkaloids act as animal glycine receptor antagonists. Catalyzes the conversion of beta-colubrine to 11-deMe brucine. This is Strychnine-11-hydroxylase from Strychnos nux-vomica (Poison nut).